The sequence spans 93 residues: NADH-ubiquinone oxidoreductase chain 4L (93 aa).

3 helical membrane passes run 2-22, 27-47, and 62-82; these read ALYE…GFVL, IILM…LVLV, and IYII…LVAY.

The protein belongs to the complex I subunit 4L family.

The protein localises to the mitochondrion inner membrane. The enzyme catalyses a ubiquinone + NADH + 5 H(+)(in) = a ubiquinol + NAD(+) + 4 H(+)(out). Core subunit of the mitochondrial membrane respiratory chain NADH dehydrogenase (Complex I) that is believed to belong to the minimal assembly required for catalysis. Complex I functions in the transfer of electrons from NADH to the respiratory chain. The immediate electron acceptor for the enzyme is believed to be ubiquinone. The protein is NADH-ubiquinone oxidoreductase chain 4L (ND4L) of Mycosarcoma maydis (Corn smut fungus).